A 118-amino-acid polypeptide reads, in one-letter code: Large ribosomal subunit protein bL20 (118 aa).

The protein belongs to the bacterial ribosomal protein bL20 family.

Its function is as follows. Binds directly to 23S ribosomal RNA and is necessary for the in vitro assembly process of the 50S ribosomal subunit. It is not involved in the protein synthesizing functions of that subunit. The polypeptide is Large ribosomal subunit protein bL20 (Leptothrix cholodnii (strain ATCC 51168 / LMG 8142 / SP-6) (Leptothrix discophora (strain SP-6))).